A 277-amino-acid chain; its full sequence is Large ribosomal subunit protein uL2 (277 aa).

Positions 218-277 (PTVRGSVMNPNDHPHGGGEGKSPIGHPSPLTPWGKPALGYKTRKNKKYSDGMIIKRRGQK) are disordered.

The protein belongs to the universal ribosomal protein uL2 family. As to quaternary structure, part of the 50S ribosomal subunit. Forms a bridge to the 30S subunit in the 70S ribosome.

Its function is as follows. One of the primary rRNA binding proteins. Required for association of the 30S and 50S subunits to form the 70S ribosome, for tRNA binding and peptide bond formation. It has been suggested to have peptidyltransferase activity; this is somewhat controversial. Makes several contacts with the 16S rRNA in the 70S ribosome. This Clostridium novyi (strain NT) protein is Large ribosomal subunit protein uL2.